The following is a 320-amino-acid chain: Malate dehydrogenase (320 aa).

Residues 10–15 and Asp34 each bind NAD(+); that span reads GSGMIG. Positions 83 and 89 each coordinate substrate. NAD(+) is bound by residues Asn96 and 119 to 121; that span reads ITN. Positions 121 and 152 each coordinate substrate. His176 serves as the catalytic Proton acceptor.

This sequence belongs to the LDH/MDH superfamily. MDH type 3 family.

The catalysed reaction is (S)-malate + NAD(+) = oxaloacetate + NADH + H(+). Catalyzes the reversible oxidation of malate to oxaloacetate. The sequence is that of Malate dehydrogenase from Bartonella quintana (strain Toulouse) (Rochalimaea quintana).